The following is a 304-amino-acid chain: Aspartate carbamoyltransferase catalytic subunit (304 aa).

Carbamoyl phosphate is bound by residues R53 and T54. Residue K82 participates in L-aspartate binding. 3 residues coordinate carbamoyl phosphate: R103, H131, and Q134. The L-aspartate site is built by R163 and R224. The carbamoyl phosphate site is built by L263 and P264.

Belongs to the aspartate/ornithine carbamoyltransferase superfamily. ATCase family. In terms of assembly, heterooligomer of catalytic and regulatory chains.

The catalysed reaction is carbamoyl phosphate + L-aspartate = N-carbamoyl-L-aspartate + phosphate + H(+). It participates in pyrimidine metabolism; UMP biosynthesis via de novo pathway; (S)-dihydroorotate from bicarbonate: step 2/3. Its function is as follows. Catalyzes the condensation of carbamoyl phosphate and aspartate to form carbamoyl aspartate and inorganic phosphate, the committed step in the de novo pyrimidine nucleotide biosynthesis pathway. This chain is Aspartate carbamoyltransferase catalytic subunit, found in Haloquadratum walsbyi (strain DSM 16790 / HBSQ001).